The sequence spans 250 residues: Triosephosphate isomerase (250 aa).

10 to 12 (NWK) contributes to the substrate binding site. The Electrophile role is filled by His-96. Glu-168 functions as the Proton acceptor in the catalytic mechanism. Substrate is bound by residues Gly-174, Ser-214, and 235–236 (GG).

Belongs to the triosephosphate isomerase family. In terms of assembly, homodimer.

The protein resides in the cytoplasm. The catalysed reaction is D-glyceraldehyde 3-phosphate = dihydroxyacetone phosphate. The protein operates within carbohydrate biosynthesis; gluconeogenesis. Its pathway is carbohydrate degradation; glycolysis; D-glyceraldehyde 3-phosphate from glycerone phosphate: step 1/1. Functionally, involved in the gluconeogenesis. Catalyzes stereospecifically the conversion of dihydroxyacetone phosphate (DHAP) to D-glyceraldehyde-3-phosphate (G3P). The polypeptide is Triosephosphate isomerase (Streptococcus suis (strain 98HAH33)).